The sequence spans 466 residues: MDFFSLNKIIKPNQKFTSNEAEFLQIATDYLEESQNYLQKGLKQLKKEYKRSIIYNPNLEYKRFVKWKENFTETFESYYDRFFITKYNHYSLSLLFSFINEQIETVIASYNSFLNEHNKLAFNKVSFSFEKKLFEATQQFNNLEKNTAISDDLPLQFKVRTTQLKAQRERELKNLLNKIKLKNLSEKKQEILLNNWFNSNERLFLKNEVKKVNWLNSPRQKQQAAQIDDQNIIELKNVYKYITNGITTNAVLKGVDLAIKSHDFIVILGPSGSGKTTLLNIISGMDRASSGSVIVNGYNMICLNDRKLTKFRQKYVGYIFQQYGLLPNLTVRENIEIGANLQPDPSKRISIDALLEAVGMDSLQKKLPNELSGGQQQRVSIARAFAKNPLLIFGDEPTGALDLEMTQIVLKQFLAIKKRYQTTMIIVTHNNLIANLADLVIYVADGKIKSLHRNLNPKQVEEIHWI.

Residues 233–463 (IELKNVYKYI…NLNPKQVEEI (231 aa)) enclose the ABC transporter domain. 269-276 (GPSGSGKT) lines the ATP pocket.

This sequence belongs to the ABC transporter superfamily.

The protein is Putative ABC transporter ATP-binding protein MG065 of Mycoplasma genitalium (strain ATCC 33530 / DSM 19775 / NCTC 10195 / G37) (Mycoplasmoides genitalium).